The primary structure comprises 644 residues: Serine/threonine kinase YeaG (644 aa).

Belongs to the PrkA family. As to quaternary structure, monomer.

It localises to the cytoplasm. It carries out the reaction L-seryl-[protein] + ATP = O-phospho-L-seryl-[protein] + ADP + H(+). The catalysed reaction is L-threonyl-[protein] + ATP = O-phospho-L-threonyl-[protein] + ADP + H(+). Its function is as follows. Kinase that plays a role in the adaptation to sustained nitrogen starvation. In Escherichia coli O157:H7, this protein is Serine/threonine kinase YeaG (yeaG).